A 433-amino-acid polypeptide reads, in one-letter code: Adenylosuccinate synthetase (433 aa).

Residues 11 to 17 (GDEGKGK) and 39 to 41 (GHT) contribute to the GTP site. The active-site Proton acceptor is aspartate 12. Aspartate 12 and glycine 39 together coordinate Mg(2+). Residues 12 to 15 (DEGK), 37 to 40 (NAGH), threonine 134, arginine 148, asparagine 230, threonine 245, and arginine 309 each bind IMP. The active-site Proton donor is histidine 40. Residue 305 to 311 (VTTGRKR) coordinates substrate. Residues arginine 311, 337–339 (KLD), and 419–421 (GTG) contribute to the GTP site.

The protein belongs to the adenylosuccinate synthetase family. As to quaternary structure, homodimer. Requires Mg(2+) as cofactor.

Its subcellular location is the cytoplasm. It catalyses the reaction IMP + L-aspartate + GTP = N(6)-(1,2-dicarboxyethyl)-AMP + GDP + phosphate + 2 H(+). It participates in purine metabolism; AMP biosynthesis via de novo pathway; AMP from IMP: step 1/2. Its function is as follows. Plays an important role in the de novo pathway and in the salvage pathway of purine nucleotide biosynthesis. Catalyzes the first committed step in the biosynthesis of AMP from IMP. The protein is Adenylosuccinate synthetase of Saccharomyces cerevisiae (strain JAY291) (Baker's yeast).